We begin with the raw amino-acid sequence, 190 residues long: Myosin, light chain 1, alkali; skeletal, fast (190 aa).

Residues 1–17 are compositionally biased toward basic and acidic residues; sequence MAPKKDAKKPEPPKKAE. Residues 1-33 form a disordered region; it reads MAPKKDAKKPEPPKKAEPAPAPAPAPEPPKADA. Over residues 19 to 28 the composition is skewed to pro residues; sequence APAPAPAPEP. 2 EF-hand domains span residues 46 to 81 and 123 to 158; these read DQME…LGQN and ATYD…LGEK.

As to quaternary structure, myosin is a hexamer of 2 heavy chains and 4 light chains. Does not bind calcium. Expressed in fast muscle fibers during skeletal muscle differentiation.

Its function is as follows. Non-regulatory myosin light chain required for proper formation and/or maintenance of myofibers, and thus appropriate muscle function. This chain is Myosin, light chain 1, alkali; skeletal, fast, found in Danio rerio (Zebrafish).